The primary structure comprises 94 residues: uncharacterized protein (94 aa).

The N-terminal stretch at 1-26 (MNDQRDQAVPWATGLAVAGFVAAVIA) is a signal peptide. The next 2 helical transmembrane spans lie at 42–62 (LLAVGLNIVAVSGLAPTLWGW) and 71–91 (FVLGAAVGVAGAWLALLALTL).

Its subcellular location is the cell membrane. This is an uncharacterized protein from Mycobacterium tuberculosis (strain CDC 1551 / Oshkosh).